The sequence spans 334 residues: GTP 3',8-cyclase (334 aa).

A Radical SAM core domain is found at 8–244; that stretch reads RYGRPLRDLR…GEVAQRHAFA (237 aa). Arg-17 contributes to the GTP binding site. [4Fe-4S] cluster is bound by residues Cys-24 and Cys-28. Tyr-30 is an S-adenosyl-L-methionine binding site. Cys-31 serves as a coordination point for [4Fe-4S] cluster. Arg-70 contributes to the GTP binding site. Gly-74 is an S-adenosyl-L-methionine binding site. Thr-101 serves as a coordination point for GTP. Residue Ser-125 coordinates S-adenosyl-L-methionine. Residue Lys-163 coordinates GTP. Residue Met-197 coordinates S-adenosyl-L-methionine. Residues Cys-261 and Cys-264 each coordinate [4Fe-4S] cluster. Position 266–268 (266–268) interacts with GTP; sequence RAR. Cys-278 is a binding site for [4Fe-4S] cluster.

This sequence belongs to the radical SAM superfamily. MoaA family. As to quaternary structure, monomer and homodimer. Requires [4Fe-4S] cluster as cofactor.

It carries out the reaction GTP + AH2 + S-adenosyl-L-methionine = (8S)-3',8-cyclo-7,8-dihydroguanosine 5'-triphosphate + 5'-deoxyadenosine + L-methionine + A + H(+). It participates in cofactor biosynthesis; molybdopterin biosynthesis. In terms of biological role, catalyzes the cyclization of GTP to (8S)-3',8-cyclo-7,8-dihydroguanosine 5'-triphosphate. The sequence is that of GTP 3',8-cyclase from Xanthomonas axonopodis pv. citri (strain 306).